A 717-amino-acid polypeptide reads, in one-letter code: Polyribonucleotide nucleotidyltransferase (717 aa).

Asp-487 and Asp-493 together coordinate Mg(2+). The 60-residue stretch at 554–613 (PKIITMAINPDKIRDVIGPSGKQINKIIEETGVKIDIEQDGTVFISSINQEMNEKAKKII) folds into the KH domain. The S1 motif domain maps to 623 to 691 (GEIYLGKVKR…KQGRVNLSRK (69 aa)).

Belongs to the polyribonucleotide nucleotidyltransferase family. Mg(2+) serves as cofactor.

Its subcellular location is the cytoplasm. It carries out the reaction RNA(n+1) + phosphate = RNA(n) + a ribonucleoside 5'-diphosphate. In terms of biological role, involved in mRNA degradation. Catalyzes the phosphorolysis of single-stranded polyribonucleotides processively in the 3'- to 5'-direction. The chain is Polyribonucleotide nucleotidyltransferase from Bacillus mycoides (strain KBAB4) (Bacillus weihenstephanensis).